Consider the following 193-residue polypeptide: Ribonuclease HII (193 aa).

One can recognise an RNase H type-2 domain in the interval 15 to 193 (CIVAGIDEAG…PYHRRSFRCC (179 aa)). D21, E22, and D112 together coordinate a divalent metal cation.

This sequence belongs to the RNase HII family. Requires Mn(2+) as cofactor. The cofactor is Mg(2+).

It is found in the cytoplasm. It catalyses the reaction Endonucleolytic cleavage to 5'-phosphomonoester.. In terms of biological role, endonuclease that specifically degrades the RNA of RNA-DNA hybrids. In Rickettsia rickettsii (strain Iowa), this protein is Ribonuclease HII.